The following is a 603-amino-acid chain: Terpenoid synthase 25 (603 aa).

Mg(2+) is bound by residues aspartate 356, aspartate 360, asparagine 500, threonine 504, and glutamate 508. Residues 356-360 (DDTCD) carry the DDXXD motif motif.

Belongs to the terpene synthase family. Tpsa subfamily. The cofactor is Mg(2+). Mn(2+) serves as cofactor. In terms of tissue distribution, predominantly expressed in roots but also in flowers.

It is found in the cytoplasm. It functions in the pathway secondary metabolite biosynthesis; terpenoid biosynthesis. Functionally, involved in terpene biosynthesis in roots. Possesses sesquiterpene (C15) synthase activity in vitro. Does not seem to be involved in diterpene (C20) biosynthesis. The sequence is that of Terpenoid synthase 25 from Arabidopsis thaliana (Mouse-ear cress).